Reading from the N-terminus, the 248-residue chain is 1-(5-phosphoribosyl)-5-[(5-phosphoribosylamino)methylideneamino] imidazole-4-carboxamide isomerase (248 aa).

The active-site Proton acceptor is D8. D129 (proton donor) is an active-site residue.

This sequence belongs to the HisA/HisF family.

Its subcellular location is the cytoplasm. The catalysed reaction is 1-(5-phospho-beta-D-ribosyl)-5-[(5-phospho-beta-D-ribosylamino)methylideneamino]imidazole-4-carboxamide = 5-[(5-phospho-1-deoxy-D-ribulos-1-ylimino)methylamino]-1-(5-phospho-beta-D-ribosyl)imidazole-4-carboxamide. The protein operates within amino-acid biosynthesis; L-histidine biosynthesis; L-histidine from 5-phospho-alpha-D-ribose 1-diphosphate: step 4/9. The polypeptide is 1-(5-phosphoribosyl)-5-[(5-phosphoribosylamino)methylideneamino] imidazole-4-carboxamide isomerase (Rhizobium etli (strain CIAT 652)).